Reading from the N-terminus, the 162-residue chain is MKKIIFAGGCFWGVEAYFNTIDGVLNTKVGYANGNTEDPTYEDVCTDSTGYAEACYIEYDEKQLKLEKLIDAYWKVVDPTLKNRQGHDEGTQYRTGIYYVDEEDLKVILESKDKEQEKYDAPIVTEILPLKNFYDAEEYHQKYLDKNPNGYCHIPKELLKKH.

Cysteine 10 is an active-site residue.

Belongs to the MsrA Met sulfoxide reductase family.

The enzyme catalyses L-methionyl-[protein] + [thioredoxin]-disulfide + H2O = L-methionyl-(S)-S-oxide-[protein] + [thioredoxin]-dithiol. It carries out the reaction [thioredoxin]-disulfide + L-methionine + H2O = L-methionine (S)-S-oxide + [thioredoxin]-dithiol. Has an important function as a repair enzyme for proteins that have been inactivated by oxidation. Catalyzes the reversible oxidation-reduction of methionine sulfoxide in proteins to methionine. The polypeptide is Peptide methionine sulfoxide reductase MsrA (Clostridium acetobutylicum (strain ATCC 824 / DSM 792 / JCM 1419 / IAM 19013 / LMG 5710 / NBRC 13948 / NRRL B-527 / VKM B-1787 / 2291 / W)).